Here is a 406-residue protein sequence, read N- to C-terminus: Formate-dependent phosphoribosylglycinamide formyltransferase (406 aa).

N(1)-(5-phospho-beta-D-ribosyl)glycinamide is bound by residues 28-29 (EL) and Glu88. ATP contacts are provided by residues Arg121, Lys162, 167-172 (SSGKGQ), 202-205 (EGFI), and Glu210. Residues 126–320 (RLAAEELGCA…EFELHAKAIL (195 aa)) form the ATP-grasp domain. Residues Glu279 and Glu291 each contribute to the Mg(2+) site. N(1)-(5-phospho-beta-D-ribosyl)glycinamide-binding positions include Asp298, Lys367, and 374-375 (RR).

It belongs to the PurK/PurT family. Homodimer.

The enzyme catalyses N(1)-(5-phospho-beta-D-ribosyl)glycinamide + formate + ATP = N(2)-formyl-N(1)-(5-phospho-beta-D-ribosyl)glycinamide + ADP + phosphate + H(+). Its pathway is purine metabolism; IMP biosynthesis via de novo pathway; N(2)-formyl-N(1)-(5-phospho-D-ribosyl)glycinamide from N(1)-(5-phospho-D-ribosyl)glycinamide (formate route): step 1/1. Its function is as follows. Involved in the de novo purine biosynthesis. Catalyzes the transfer of formate to 5-phospho-ribosyl-glycinamide (GAR), producing 5-phospho-ribosyl-N-formylglycinamide (FGAR). Formate is provided by PurU via hydrolysis of 10-formyl-tetrahydrofolate. This is Formate-dependent phosphoribosylglycinamide formyltransferase from Janthinobacterium sp. (strain Marseille) (Minibacterium massiliensis).